Here is a 624-residue protein sequence, read N- to C-terminus: Basal cell adhesion molecule (624 aa).

Positions Met1 to Ala25 are cleaved as a signal peptide. Ig-like V-type domains lie at Glu26–Arg136 and Pro141–Arg251. The Extracellular portion of the chain corresponds to Glu26–Ala543. 3 disulfide bridges follow: Cys47-Cys119, Cys166-Cys231, and Cys285-Cys331. 3 Ig-like C2-type domains span residues Pro268 to Gln343, Pro357 to Gln436, and Pro443 to Gly534. Residues Asn315, Asn371, and Asn378 are each glycosylated (N-linked (GlcNAc...) asparagine). Disulfide bonds link Cys379-Cys419 and Cys468-Cys518. Residues Lys477–Gly497 form a disordered region. The helical transmembrane segment at Gly544–Phe564 threads the bilayer. The Cytoplasmic portion of the chain corresponds to Tyr565–Cys624. Residues Gly574–Cys624 are disordered. The segment covering Arg587 to His601 has biased composition (basic and acidic residues). Phosphoserine occurs at positions 592, 594, and 596. Residues Leu605–Cys624 are compositionally biased toward gly residues.

Homodimer. Interacts with ITGA4:ITGB1. Interacts with spectrins SPTA1 and SPTB1.

It localises to the cell membrane. Transmembrane glycoprotein that functions as both a receptor and an adhesion molecule playing a crucial role in cell adhesion, motility, migration and invasion. Extracellular domain enables binding to extracellular matrix proteins, such as laminin, integrin and other ligands while its intracellular domain interacts with cytoskeletal proteins like hemoglobin, facilitating cell signal transduction. Serves as a receptor for laminin alpha-5/LAMA5 to promote cell adhesion. Mechanistically, JAK2 induces BCAM phosphorylation and activates its adhesion to laminin by stimulating a Rap1/AKT signaling pathway in the absence of EPOR. The polypeptide is Basal cell adhesion molecule (Bcam) (Rattus norvegicus (Rat)).